We begin with the raw amino-acid sequence, 536 residues long: Hydroxylamine oxidoreductase (536 aa).

A signal peptide spans 1–26 (MFEIFKKPLSRIVGATFAFAGVTLLA). Heme c is bound by residues C116, C119, H120, H136, C160, C163, H164, H168, C179, C182, H183, H198, C223, C226, H227, C234, C237, H238, H241, C254, C257, and H258. Residue H263 participates in hydroxylamine binding. Residues H274, C301, C304, H305, H311, C346, C349, H350, H443, and Y451 each contribute to the heme c site.

Homotrimer; subunits are linked by two covalent bonds between Tyr-451 of one subunit and heme P460 of an adjacent subunit. Heme c serves as cofactor.

It localises to the anammoxosome. The catalysed reaction is hydroxylamine + 3 Fe(III)-[cytochrome c] = nitric oxide + 3 Fe(II)-[cytochrome c] + 3 H(+). In terms of biological role, catalyzes the oxidation of hydroxylamine to nitric oxide with cytochrome c acting as an electron acceptor. Does not oxidize hydroxylamine to nitrite. Also able to catalyze the four-electron oxidation of hydrazine to N(2) in vitro with reduced efficiency; however, this reaction is probably not physiological. The sequence is that of Hydroxylamine oxidoreductase from Kuenenia stuttgartiensis.